Reading from the N-terminus, the 355-residue chain is Transcription factor TCP13 (355 aa).

The segment at 1-57 is disordered; sequence MNIVSWKDANDEVAGGATTRREREVKEDQEETEVRATSGKTVIKKQPTSISSSSSSW. The 59-residue stretch at 74 to 132 folds into the TCP domain; sequence GKDRHSKVCTLRGLRDRRVRLSVPTAIQLYDLQERLGVDQPSKAVDWLLDAAKEEIDEL. Residues 329 to 355 are disordered; that stretch reads TNSTTTANMSRHLGSERCTSRGSDHHM. Positions 341–355 are enriched in basic and acidic residues; the sequence is LGSERCTSRGSDHHM.

As to quaternary structure, interacts with AHL27 and AHL29. Interacts with SPL. Interacts with KIN10; KIN11 and FLZ3. Expressed in cotyledons, particularly in the vascular region, in leaves, buds, flowers and immature siliques, and, to a lower extent, in roots.

The protein resides in the nucleus. It is found in the plastid. Its subcellular location is the chloroplast. Functionally, plays a pivotal role in the control of morphogenesis of shoot organs by negatively regulating the expression of boundary-specific genes such as CUC genes, probably through the induction of miRNA (e.g. miR164). Binds to the 3'-ACC-5' repeats in the light-responsive promoter (LRP) of psbD, and activates its transcription. Participates in ovule development. The chain is Transcription factor TCP13 (TCP13) from Arabidopsis thaliana (Mouse-ear cress).